The chain runs to 74 residues: Defensin-like protein 39 (74 aa).

The N-terminal stretch at 1-28 (MEKKSLAALSFLLLLVLFVAQEIVVTEA) is a signal peptide. 4 disulfide bridges follow: cysteine 31-cysteine 74, cysteine 42-cysteine 63, cysteine 48-cysteine 68, and cysteine 52-cysteine 70.

The protein belongs to the DEFL family. In terms of tissue distribution, pods.

The protein localises to the secreted. Functionally, possesses antifungal activity. In Pisum sativum (Garden pea), this protein is Defensin-like protein 39 (PI39).